The sequence spans 360 residues: Peptide chain release factor 1 (360 aa).

Position 233 is an N5-methylglutamine (Q233). Positions 286–305 are disordered; the sequence is NEIAQERKSQVGTGDRSERI.

Belongs to the prokaryotic/mitochondrial release factor family. Post-translationally, methylated by PrmC. Methylation increases the termination efficiency of RF1.

It localises to the cytoplasm. Peptide chain release factor 1 directs the termination of translation in response to the peptide chain termination codons UAG and UAA. The polypeptide is Peptide chain release factor 1 (Acetivibrio thermocellus (strain ATCC 27405 / DSM 1237 / JCM 9322 / NBRC 103400 / NCIMB 10682 / NRRL B-4536 / VPI 7372) (Clostridium thermocellum)).